The following is a 341-amino-acid chain: Hyaluronidase A (341 aa).

N-linked (GlcNAc...) asparagine glycans are attached at residues Asn3, Asn68, and Asn83. 2 disulfide bridges follow: Cys23-Cys311 and Cys189-Cys201.

The protein belongs to the glycosyl hydrolase 56 family. As to expression, expressed by the venom gland.

The protein resides in the secreted. The enzyme catalyses Random hydrolysis of (1-&gt;4)-linkages between N-acetyl-beta-D-glucosamine and D-glucuronate residues in hyaluronate.. May hydrolyze high molecular weight hyaluronic acid to produce small oligosaccharides. The protein is Hyaluronidase A of Vespa velutina (Asian yellow-legged hornet).